The primary structure comprises 613 residues: Lysophospholipase 1 (613 aa).

Residues 1–21 (MLFRGLSLWMLFLASCLSALA) form the signal peptide. Residues 55–593 (DCPSDNIVES…YNYCWSGLYD (539 aa)) enclose the PLA2c domain. 13 N-linked (GlcNAc...) asparagine glycosylation sites follow: Asn-142, Asn-173, Asn-220, Asn-244, Asn-281, Asn-319, Asn-348, Asn-365, Asn-494, Asn-499, Asn-523, Asn-551, and Asn-572.

Belongs to the lysophospholipase family.

Its subcellular location is the secreted. It catalyses the reaction a 1-acyl-sn-glycero-3-phosphocholine + H2O = sn-glycerol 3-phosphocholine + a fatty acid + H(+). Its function is as follows. Catalyzes the release of fatty acids from lysophospholipids. Required for survival under high osmolarity, for normal osmotic stress-induced gene expression, and for nutrient-mediated repression of sexual differentiation. The chain is Lysophospholipase 1 (plb1) from Schizosaccharomyces pombe (strain 972 / ATCC 24843) (Fission yeast).